The following is a 369-amino-acid chain: Protein-glutamate methylesterase/protein-glutamine glutaminase (369 aa).

Positions 6-122 (RAVVADDSHF…SMEMSRLKDQ (117 aa)) constitute a Response regulatory domain. Aspartate 56 carries the post-translational modification 4-aspartylphosphate. Residues 136 to 178 (GATGSRSGTGSDSGTAPTTAGGSATDRRGTGGSSGQTTYVANP) form a disordered region. The span at 138-159 (TGSRSGTGSDSGTAPTTAGGSA) shows a compositional bias: low complexity. A CheB-type methylesterase domain is found at 173-367 (TYVANPTLVI…DGVIDTITTE (195 aa)). Catalysis depends on residues serine 185, histidine 212, and aspartate 309.

The protein belongs to the CheB family. In terms of processing, phosphorylated by CheA. Phosphorylation of the N-terminal regulatory domain activates the methylesterase activity.

It localises to the cytoplasm. It catalyses the reaction [protein]-L-glutamate 5-O-methyl ester + H2O = L-glutamyl-[protein] + methanol + H(+). The catalysed reaction is L-glutaminyl-[protein] + H2O = L-glutamyl-[protein] + NH4(+). Involved in chemotaxis. Part of a chemotaxis signal transduction system that modulates chemotaxis in response to various stimuli. Catalyzes the demethylation of specific methylglutamate residues introduced into the chemoreceptors (methyl-accepting chemotaxis proteins or MCP) by CheR. Also mediates the irreversible deamidation of specific glutamine residues to glutamic acid. In Haloarcula marismortui (strain ATCC 43049 / DSM 3752 / JCM 8966 / VKM B-1809) (Halobacterium marismortui), this protein is Protein-glutamate methylesterase/protein-glutamine glutaminase.